The primary structure comprises 291 residues: Phosphatidylglycerol--prolipoprotein diacylglyceryl transferase (291 aa).

Transmembrane regions (helical) follow at residues 21–41 (VALH…MWLA), 60–80 (LLYA…VLFY), 96–116 (WDGG…MIIF), 130–150 (FIAP…FING), 198–218 (SQLY…NLFI), 225–245 (GAVS…VEFF), and 260–280 (ISMG…MMVW). Position 143 (arginine 143) interacts with a 1,2-diacyl-sn-glycero-3-phospho-(1'-sn-glycerol).

The protein belongs to the Lgt family.

It is found in the cell inner membrane. It catalyses the reaction L-cysteinyl-[prolipoprotein] + a 1,2-diacyl-sn-glycero-3-phospho-(1'-sn-glycerol) = an S-1,2-diacyl-sn-glyceryl-L-cysteinyl-[prolipoprotein] + sn-glycerol 1-phosphate + H(+). It functions in the pathway protein modification; lipoprotein biosynthesis (diacylglyceryl transfer). In terms of biological role, catalyzes the transfer of the diacylglyceryl group from phosphatidylglycerol to the sulfhydryl group of the N-terminal cysteine of a prolipoprotein, the first step in the formation of mature lipoproteins. This chain is Phosphatidylglycerol--prolipoprotein diacylglyceryl transferase, found in Salmonella newport (strain SL254).